A 347-amino-acid chain; its full sequence is Glucose 1-dehydrogenase (347 aa).

Cysteine 39 is a binding site for Zn(2+). Threonine 41 is a substrate binding site. 2 residues coordinate Zn(2+): histidine 64 and glutamate 65. Positions 110 and 146 each coordinate substrate. Residue glutamate 146 participates in Zn(2+) binding. NADP(+) contacts are provided by residues 178-181, 260-262, and 289-291; these read AGPV, LGV, and SVN. Asparagine 291 contributes to the substrate binding site.

Belongs to the zinc-containing alcohol dehydrogenase family. Glucose 1-dehydrogenase subfamily. As to quaternary structure, homodimer. It depends on Zn(2+) as a cofactor.

It carries out the reaction D-glucose + NAD(+) = D-glucono-1,5-lactone + NADH + H(+). The catalysed reaction is D-glucose + NADP(+) = D-glucono-1,5-lactone + NADPH + H(+). Functionally, catalyzes the NAD(P)(+)-dependent oxidation of D-glucose to D-gluconate via gluconolactone. To a lesser extent, is also active with xylose as substrate, but mannose, arabinose, galactose, fructose 6-phosphate, glucose 6-phosphate, glycerinaldehyde 3-phosphate, ribose, sorbitol, ethanol, erythritol, or lactose are not oxidized by the enzyme. Can utilize both NAD(+) and NADP(+) as electron acceptor, with a marked preference for NADP(+). Is involved in the degradation of glucose through a non-phosphorylative variant of the Entner-Doudoroff pathway. This is Glucose 1-dehydrogenase (gdh) from Thermoproteus tenax (strain ATCC 35583 / DSM 2078 / JCM 9277 / NBRC 100435 / Kra 1).